Consider the following 475-residue polypeptide: Sulfate adenylyltransferase subunit 1 (475 aa).

In terms of domain architecture, tr-type G spans 25 to 239; sequence KSLLRFLTCG…EVLETVEIQR (215 aa). The interval 34–41 is G1; the sequence is GSVDDGKS. A GTP-binding site is contributed by 34-41; the sequence is GSVDDGKS. The G2 stretch occupies residues 92–96; that stretch reads GITID. The G3 stretch occupies residues 113 to 116; it reads DTPG. GTP contacts are provided by residues 113 to 117 and 168 to 171; these read DTPGH and NKMD. The G4 stretch occupies residues 168-171; that stretch reads NKMD. The interval 206–208 is G5; the sequence is SAL.

The protein belongs to the TRAFAC class translation factor GTPase superfamily. Classic translation factor GTPase family. CysN/NodQ subfamily. Heterodimer composed of CysD, the smaller subunit, and CysN.

The enzyme catalyses sulfate + ATP + H(+) = adenosine 5'-phosphosulfate + diphosphate. It participates in sulfur metabolism; hydrogen sulfide biosynthesis; sulfite from sulfate: step 1/3. Functionally, with CysD forms the ATP sulfurylase (ATPS) that catalyzes the adenylation of sulfate producing adenosine 5'-phosphosulfate (APS) and diphosphate, the first enzymatic step in sulfur assimilation pathway. APS synthesis involves the formation of a high-energy phosphoric-sulfuric acid anhydride bond driven by GTP hydrolysis by CysN coupled to ATP hydrolysis by CysD. This is Sulfate adenylyltransferase subunit 1 from Escherichia coli O139:H28 (strain E24377A / ETEC).